Consider the following 464-residue polypeptide: ATP synthase subunit beta (464 aa).

Residue 148–155 (GGAGVGKT) coordinates ATP.

It belongs to the ATPase alpha/beta chains family. As to quaternary structure, F-type ATPases have 2 components, CF(1) - the catalytic core - and CF(0) - the membrane proton channel. CF(1) has five subunits: alpha(3), beta(3), gamma(1), delta(1), epsilon(1). CF(0) has three main subunits: a(1), b(2) and c(9-12). The alpha and beta chains form an alternating ring which encloses part of the gamma chain. CF(1) is attached to CF(0) by a central stalk formed by the gamma and epsilon chains, while a peripheral stalk is formed by the delta and b chains.

The protein resides in the cell inner membrane. It catalyses the reaction ATP + H2O + 4 H(+)(in) = ADP + phosphate + 5 H(+)(out). Functionally, produces ATP from ADP in the presence of a proton gradient across the membrane. The catalytic sites are hosted primarily by the beta subunits. This Acinetobacter baylyi (strain ATCC 33305 / BD413 / ADP1) protein is ATP synthase subunit beta.